We begin with the raw amino-acid sequence, 460 residues long: uncharacterized protein (460 aa).

The tat-type signal signal peptide spans 1-33; sequence MKESNSRREFLSQSGKMVTAAALFGTSVPLAHA.

The protein belongs to the metallo-dependent hydrolases superfamily. Exported by the Tat system. The position of the signal peptide cleavage has not been experimentally proven. Can also be exported by the Sec system.

This is an uncharacterized protein from Escherichia coli (strain K12).